Consider the following 227-residue polypeptide: PKHD-type hydroxylase Veis_3084 (227 aa).

A disordered region spans residues 27–51; that stretch reads DDGKDSAGTQARQAKNNQQLPRDSE. Positions 33–47 are enriched in polar residues; sequence AGTQARQAKNNQQLP. A Fe2OG dioxygenase domain is found at 78-179; the sequence is RVFPPRVNRY…RMACFFWVES (102 aa). 3 residues coordinate Fe cation: His-97, Asp-99, and His-160. A 2-oxoglutarate-binding site is contributed by Arg-170.

Requires Fe(2+) as cofactor. It depends on L-ascorbate as a cofactor.

In Verminephrobacter eiseniae (strain EF01-2), this protein is PKHD-type hydroxylase Veis_3084.